Here is a 31-residue protein sequence, read N- to C-terminus: Cytochrome b6-f complex subunit 6 (31 aa).

Residues 4–26 (ITSYFGFLLAASTITSALLIGLS) form a helical membrane-spanning segment.

It belongs to the PetL family. In terms of assembly, the 4 large subunits of the cytochrome b6-f complex are cytochrome b6, subunit IV (17 kDa polypeptide, PetD), cytochrome f and the Rieske protein, while the 4 small subunits are PetG, PetL, PetM and PetN. The complex functions as a dimer.

It localises to the plastid. Its subcellular location is the chloroplast thylakoid membrane. Component of the cytochrome b6-f complex, which mediates electron transfer between photosystem II (PSII) and photosystem I (PSI), cyclic electron flow around PSI, and state transitions. PetL is important for photoautotrophic growth as well as for electron transfer efficiency and stability of the cytochrome b6-f complex. In Chloranthus spicatus (Chulantree), this protein is Cytochrome b6-f complex subunit 6.